The chain runs to 133 residues: NADPH-dependent 7-cyano-7-deazaguanine reductase (133 aa).

Cys-49 functions as the Thioimide intermediate in the catalytic mechanism. Catalysis depends on Asp-56, which acts as the Proton donor. Substrate contacts are provided by residues 71–73 (IEL) and 90–91 (HE).

It belongs to the GTP cyclohydrolase I family. QueF type 1 subfamily.

The protein resides in the cytoplasm. The enzyme catalyses 7-aminomethyl-7-carbaguanine + 2 NADP(+) = 7-cyano-7-deazaguanine + 2 NADPH + 3 H(+). It participates in tRNA modification; tRNA-queuosine biosynthesis. Catalyzes the NADPH-dependent reduction of 7-cyano-7-deazaguanine (preQ0) to 7-aminomethyl-7-deazaguanine (preQ1). This chain is NADPH-dependent 7-cyano-7-deazaguanine reductase, found in Leptospira borgpetersenii serovar Hardjo-bovis (strain JB197).